We begin with the raw amino-acid sequence, 135 residues long: ATP synthase epsilon chain (135 aa).

It belongs to the ATPase epsilon chain family. As to quaternary structure, F-type ATPases have 2 components, CF(1) - the catalytic core - and CF(0) - the membrane proton channel. CF(1) has five subunits: alpha(3), beta(3), gamma(1), delta(1), epsilon(1). CF(0) has three main subunits: a, b and c.

It is found in the cell inner membrane. Its function is as follows. Produces ATP from ADP in the presence of a proton gradient across the membrane. This is ATP synthase epsilon chain from Bradyrhizobium sp. (strain BTAi1 / ATCC BAA-1182).